Reading from the N-terminus, the 613-residue chain is ATP-dependent RNA helicase DRS1 (613 aa).

2 disordered regions span residues 1–20 (MPDF…SDSE) and 79–104 (GFGM…PEVK). Acidic residues-rich tracts occupy residues 9-18 (DSDEEVDVSD) and 88-100 (EEEE…EVEV). Residues 130 to 158 (TSFQTLQLSRPVLKGIAELKFTKPTPIQS) carry the Q motif motif. Positions 161–335 (IPIALLGKDI…QLSLQKPVRI (175 aa)) constitute a Helicase ATP-binding domain. Residue 174–181 (AQTGSGKT) coordinates ATP. Positions 282–285 (DEAD) match the DEAD box motif. The 178-residue stretch at 364–541 (LLYQLLKGVS…ELLRAEMELT (178 aa)) folds into the Helicase C-terminal domain. The stretch at 504-552 (KQAEETNKLLESKESVIDEVLEEEKEAKELLRAEMELTKASNLIKHEQE) forms a coiled coil. Residues 571-613 (TKHGKKVNSKKRKANEVRKDEGRSYKKTKTDRMKISNKKKSKK) form a disordered region. Over residues 572–583 (KHGKKVNSKKRK) the composition is skewed to basic residues. Residues 584 to 604 (ANEVRKDEGRSYKKTKTDRMK) show a composition bias toward basic and acidic residues.

The protein belongs to the DEAD box helicase family. DDX27/DRS1 subfamily. Associates with pre-ribosomal particles.

Its subcellular location is the nucleus. The protein resides in the nucleolus. It catalyses the reaction ATP + H2O = ADP + phosphate + H(+). In terms of biological role, ATP-binding RNA helicase involved in ribosome assembly. The polypeptide is ATP-dependent RNA helicase DRS1 (DRS1) (Candida albicans (strain SC5314 / ATCC MYA-2876) (Yeast)).